The sequence spans 426 residues: FK506-binding protein 3 (426 aa).

Disordered regions lie at residues S37 to Q143 and T171 to K314. 3 stretches are compositionally biased toward acidic residues: residues D65–E94, E111–S131, and Q181–E225. 3 stretches are compositionally biased toward basic and acidic residues: residues G226 to S257, K264 to E278, and V287 to K311. Residues G340 to K426 form the PPIase FKBP-type domain.

Belongs to the FKBP-type PPIase family. FKBP3/4 subfamily.

It is found in the nucleus. It localises to the nucleolus. The enzyme catalyses [protein]-peptidylproline (omega=180) = [protein]-peptidylproline (omega=0). With respect to regulation, inhibited by both FK506 and rapamycin. In terms of biological role, PPIases accelerate the folding of proteins. It catalyzes the cis-trans isomerization of proline imidic peptide bonds in oligopeptides. This is FK506-binding protein 3 (FPR3) from Candida albicans (strain SC5314 / ATCC MYA-2876) (Yeast).